The sequence spans 316 residues: Ribosomal RNA small subunit methyltransferase H (316 aa).

S-adenosyl-L-methionine is bound by residues 32–34 (AGH), D52, F79, D100, and Q107.

Belongs to the methyltransferase superfamily. RsmH family.

The protein localises to the cytoplasm. It carries out the reaction cytidine(1402) in 16S rRNA + S-adenosyl-L-methionine = N(4)-methylcytidine(1402) in 16S rRNA + S-adenosyl-L-homocysteine + H(+). In terms of biological role, specifically methylates the N4 position of cytidine in position 1402 (C1402) of 16S rRNA. The protein is Ribosomal RNA small subunit methyltransferase H of Lysinibacillus sphaericus (strain C3-41).